The following is a 360-amino-acid chain: DNA replication and repair protein RecF (360 aa).

33–40 (GENGSGKT) is a binding site for ATP.

Belongs to the RecF family.

Its subcellular location is the cytoplasm. In terms of biological role, the RecF protein is involved in DNA metabolism; it is required for DNA replication and normal SOS inducibility. RecF binds preferentially to single-stranded, linear DNA. It also seems to bind ATP. The polypeptide is DNA replication and repair protein RecF (Rickettsia typhi (strain ATCC VR-144 / Wilmington)).